A 1402-amino-acid polypeptide reads, in one-letter code: DNA-directed RNA polymerase subunit beta' (1402 aa).

C70, C72, C85, and C88 together coordinate Zn(2+). Residues D460, D462, and D464 each coordinate Mg(2+). Zn(2+) contacts are provided by C812, C886, C893, and C896. Residues 1373–1402 (DRFLNGSASSNEKSRSAGVLEATDEESAGD) are disordered.

Belongs to the RNA polymerase beta' chain family. As to quaternary structure, the RNAP catalytic core consists of 2 alpha, 1 beta, 1 beta' and 1 omega subunit. When a sigma factor is associated with the core the holoenzyme is formed, which can initiate transcription. Mg(2+) is required as a cofactor. Requires Zn(2+) as cofactor.

It catalyses the reaction RNA(n) + a ribonucleoside 5'-triphosphate = RNA(n+1) + diphosphate. DNA-dependent RNA polymerase catalyzes the transcription of DNA into RNA using the four ribonucleoside triphosphates as substrates. This Dichelobacter nodosus (strain VCS1703A) protein is DNA-directed RNA polymerase subunit beta'.